A 267-amino-acid polypeptide reads, in one-letter code: Diphthine synthase (267 aa).

S-adenosyl-L-methionine-binding positions include L9, D85, V88, S113–I114, L170, A211, and H236.

Belongs to the diphthine synthase family. In terms of assembly, homodimer.

The enzyme catalyses 2-[(3S)-amino-3-carboxypropyl]-L-histidyl-[translation elongation factor 2] + 3 S-adenosyl-L-methionine = diphthine-[translation elongation factor 2] + 3 S-adenosyl-L-homocysteine + 3 H(+). Its pathway is protein modification; peptidyl-diphthamide biosynthesis. Functionally, S-adenosyl-L-methionine-dependent methyltransferase that catalyzes the trimethylation of the amino group of the modified target histidine residue in translation elongation factor 2 (EF-2), to form an intermediate called diphthine. The three successive methylation reactions represent the second step of diphthamide biosynthesis. This chain is Diphthine synthase, found in Methanococcoides burtonii (strain DSM 6242 / NBRC 107633 / OCM 468 / ACE-M).